A 163-amino-acid polypeptide reads, in one-letter code: MELETVLQSFQSVRQLLQYTSKNTSGFWRYLFGSTLSKVVNRVKEDYREEFENILADCPGLLASLDLCYHLVFQEKVVRSLDFSSVGRTVASIAFLATILDKWSEKSHLSWDYMLDYMSMQLWRAWLKRRVCIYSLARPLTMPPLPTLQEEKEEERNPAVVEK.

This sequence belongs to the adenoviridae E1B 19 kDa protein family.

The protein resides in the host cell membrane. It localises to the host nucleus envelope. Its subcellular location is the host nucleus lamina. Putative adenovirus Bcl-2 homolog that inhibits apoptosis induced by TNF or FAS pathways, as well as p53-mediated apoptosis. Without E1B 19K function, virus production is compromised because of premature death of host cell. Interacts with Bax protein in cell lysates. This Human adenovirus A serotype 12 (HAdV-12) protein is E1B protein, small T-antigen.